A 248-amino-acid polypeptide reads, in one-letter code: Carbohydrate deacetylase (248 aa).

Mg(2+) is bound by residues His59 and His121.

It belongs to the YdjC deacetylase family. Mg(2+) is required as a cofactor.

Its function is as follows. Probably catalyzes the deacetylation of acetylated carbohydrates an important step in the degradation of oligosaccharides. The chain is Carbohydrate deacetylase from Brevibacillus brevis (strain 47 / JCM 6285 / NBRC 100599).